The sequence spans 562 residues: Vacuolar basic amino acid transporter 1 (562 aa).

The Vacuolar segment spans residues 1 to 30 (MQTLDETSNLLPPPEEAEAPPLEQKFHEYN). Residues 31-51 (LALPKFPILFSLWLGSFLSSL) traverse the membrane as a helical segment. The Cytoplasmic portion of the chain corresponds to 52 to 100 (DSTIVANIMNRVAEEFSESSKKQWIATSFLLTNTAFQPLYGKLSDITGR). A helical membrane pass occupies residues 101-121 (KSALLTAQFFFGLGCLLTCFA). Topologically, residues 122–131 (RNVTEFSIAR) are vacuolar. N-linked (GlcNAc...) asparagine glycosylation occurs at Asn-123. A helical transmembrane segment spans residues 132-152 (AICGIGAGGLNAISSIAVSDI). Topologically, residues 153-166 (CTARERGVYQGYAN) are cytoplasmic. Residues 167 to 187 (IVFGFGQLLGAPLGGVFIETI) traverse the membrane as a helical segment. The Vacuolar portion of the chain corresponds to 188-190 (GWR). Residues 191–211 (ALFGIQVPVIMLCSVLAIKNI) form a helical membrane-spanning segment. Topologically, residues 212–232 (NIKLFHVPPMKERYTLKNLSR) are cytoplasmic. The helical transmembrane segment at 233 to 253 (IDIFGSLSLVATISGVLFLCS) threads the bilayer. Residues 254 to 255 (SQ) are Vacuolar-facing. A helical transmembrane segment spans residues 256–276 (LNKLYLALFTIGSFIVFILVE). The Cytoplasmic portion of the chain corresponds to 277–292 (RYYATEKILPFELLTR). The helical transmembrane segment at 293-313 (SFCLSSAVTVISSFVVFGEIF) threads the bilayer. At 314–331 (RSPIYLQLLQNISVTKTG) the chain is on the vacuolar side. Asn-324 carries N-linked (GlcNAc...) asparagine glycosylation. A helical membrane pass occupies residues 332 to 352 (LFLIFPSISVAVGSLVTGWVL). Residues 353-365 (RNTKINLAHCAYQ) are Cytoplasmic-facing. A helical membrane pass occupies residues 366 to 386 (IIFGGMIMQLLGLGLGYFLLS). Residues 387–419 (HLNPDYTIYDMLESITFRSNSIWWKLIYVFASV) lie on the Vacuolar side of the membrane. Residues 420-440 (LVSFGYACLLVATLVSIVFTV) form a helical membrane-spanning segment. Residues 441–448 (EKSQQGTM) lie on the Cytoplasmic side of the membrane. Residues 449-469 (TGVFYLWRSIGNVLGASLTLV) form a helical membrane-spanning segment. Topologically, residues 470–528 (SYENSLSSMLWNYMFKTKRDDEYHFTKKQYYSLINDSSYLRGPNFPTDIFVRILDVYKK) are vacuolar. N-linked (GlcNAc...) asparagine glycosylation is present at Asn-504. The chain crosses the membrane as a helical span at residues 529–549 (AFLISYIPNIALAAVGIVLSL). The Cytoplasmic segment spans residues 550 to 562 (YLVKHTYKRSSSS).

It belongs to the major facilitator superfamily.

The protein resides in the vacuole membrane. Its function is as follows. Transporter required for vacuolar uptake of at least histidine and lysine. The polypeptide is Vacuolar basic amino acid transporter 1 (VBA1) (Saccharomyces cerevisiae (strain ATCC 204508 / S288c) (Baker's yeast)).